Here is a 77-residue protein sequence, read N- to C-terminus: Sec-independent protein translocase protein TatA (77 aa).

A helical transmembrane segment spans residues 1-21 (MGGLSIWHWLIVLLIVALVFG). The tract at residues 43-77 (MKESEAPADAQQLPRSGSVNVDAKDAARSSDSNKA) is disordered. A compositionally biased stretch (basic and acidic residues) spans 64–77 (DAKDAARSSDSNKA).

The protein belongs to the TatA/E family. The Tat system comprises two distinct complexes: a TatABC complex, containing multiple copies of TatA, TatB and TatC subunits, and a separate TatA complex, containing only TatA subunits. Substrates initially bind to the TatABC complex, which probably triggers association of the separate TatA complex to form the active translocon.

Its subcellular location is the cell inner membrane. Functionally, part of the twin-arginine translocation (Tat) system that transports large folded proteins containing a characteristic twin-arginine motif in their signal peptide across membranes. TatA could form the protein-conducting channel of the Tat system. This is Sec-independent protein translocase protein TatA from Burkholderia mallei (strain NCTC 10247).